We begin with the raw amino-acid sequence, 608 residues long: Cytoplasmic dynein 1 intermediate chain 1 (608 aa).

Composition is skewed to basic and acidic residues over residues 1 to 13 (MSDK…ELER) and 20 to 60 (QIRE…RETE). A disordered region spans residues 1–106 (MSDKSDLKAE…SGDLGPLTRR (106 aa)). Ser2 is subject to N-acetylserine. Position 50 is a phosphoserine (Ser50). Residues 70 to 79 (PEPPLVPTPM) are compositionally biased toward pro residues. Positions 80–90 (SPSSKSVSTPS) are enriched in low complexity. Residue Ser83 is modified to Phosphoserine. Phosphothreonine is present on Thr88. Residues Ser90, Ser94, and Ser97 each carry the phosphoserine modification. The tract at residues 110 to 126 (KLGVSKITQVDFLPREV) is interaction with DYNLT1. A disordered region spans residues 132 to 184 (ETQTPLATHQSEEDEDDEEMVEPKGDQDSEQENEDKKQEVKEAPPRELTEEEK). Position 139 is a phosphothreonine (Thr139). Residues Ser142 and Ser160 each carry the phosphoserine modification. A compositionally biased stretch (basic and acidic residues) spans 165-184 (EDKKQEVKEAPPRELTEEEK). WD repeat units follow at residues 248 to 297 (SKHR…TTPE), 301 to 341 (HCQS…RTPV), 350 to 391 (AHTH…TPQE), 400 to 440 (SKPV…AGIG), 445 to 490 (GHQG…PLYS), 493 to 533 (DNAD…EVPT), and 539 to 578 (EGAS…VPHN). Ser598 carries the post-translational modification Phosphoserine.

It belongs to the dynein intermediate chain family. Homodimer. The cytoplasmic dynein 1 complex consists of two catalytic heavy chains (HCs) and a number of non-catalytic subunits presented by intermediate chains (ICs), light intermediate chains (LICs) and light chains (LCs); the composition seems to vary in respect to the IC, LIC and LC composition. The heavy chain homodimer serves as a scaffold for the probable homodimeric assembly of the respective non-catalytic subunits. The ICs and LICs bind directly to the HC dimer and the LCs assemble on the IC dimer. Interacts with DYNC1H1. Interacts with DYNLT1 and DYNLT3. Interacts with DCTN1. Interacts with MCRS1; the interaction is required for the proper distribution of centriolar satellites.

It localises to the cytoplasm. The protein resides in the chromosome. The protein localises to the centromere. It is found in the kinetochore. Its subcellular location is the cytoskeleton. It localises to the spindle pole. In terms of biological role, acts as one of several non-catalytic accessory components of the cytoplasmic dynein 1 complex that are thought to be involved in linking dynein to cargos and to adapter proteins that regulate dynein function. Cytoplasmic dynein 1 acts as a motor for the intracellular retrograde motility of vesicles and organelles along microtubules. The intermediate chains mediate the binding of dynein to dynactin via its 150 kDa component (p150-glued) DCTN1. May play a role in mediating the interaction of cytoplasmic dynein with membranous organelles and kinetochores. This Bos taurus (Bovine) protein is Cytoplasmic dynein 1 intermediate chain 1 (DYNC1I1).